Here is a 117-residue protein sequence, read N- to C-terminus: Immunoglobulin heavy variable 3-30-3 (117 aa).

Positions 1–19 (MEFGLSWVFLVALLRGVQC) are cleaved as a signal peptide. At glutamine 20 the chain carries Pyrrolidone carboxylic acid. The framework-1 stretch occupies residues 20 to 44 (QVQLVESGGGVVQPGRSLRLSCAAS). The region spanning 20–117 (QVQLVESGGG…EDTAVYYCAR (98 aa)) is the Ig-like domain. The cysteines at positions 41 and 115 are disulfide-linked. The interval 45–52 (GFTFSSYA) is complementarity-determining-1. Residues 53–69 (MHWVRQAPGKGLEWVAV) are framework-2. A complementarity-determining-2 region spans residues 70–77 (ISYDGSNK). The segment at 78–115 (YYADSVKGRFTISRDNSKNTLYLQMNSLRAEDTAVYYC) is framework-3. The complementarity-determining-3 stretch occupies residues 116 to 117 (AR).

In terms of assembly, immunoglobulins are composed of two identical heavy chains and two identical light chains; disulfide-linked.

It is found in the secreted. It localises to the cell membrane. Its function is as follows. V region of the variable domain of immunoglobulin heavy chains that participates in the antigen recognition. Immunoglobulins, also known as antibodies, are membrane-bound or secreted glycoproteins produced by B lymphocytes. In the recognition phase of humoral immunity, the membrane-bound immunoglobulins serve as receptors which, upon binding of a specific antigen, trigger the clonal expansion and differentiation of B lymphocytes into immunoglobulins-secreting plasma cells. Secreted immunoglobulins mediate the effector phase of humoral immunity, which results in the elimination of bound antigens. The antigen binding site is formed by the variable domain of one heavy chain, together with that of its associated light chain. Thus, each immunoglobulin has two antigen binding sites with remarkable affinity for a particular antigen. The variable domains are assembled by a process called V-(D)-J rearrangement and can then be subjected to somatic hypermutations which, after exposure to antigen and selection, allow affinity maturation for a particular antigen. The polypeptide is Immunoglobulin heavy variable 3-30-3 (Homo sapiens (Human)).